Consider the following 211-residue polypeptide: Arginine exporter protein ArgO (211 aa).

The next 6 helical transmembrane spans lie at 1–21 (MLSYYFQGLVLGAAMILPLGP), 37–57 (LMIAMLCAVSDLLLICAGIFG), 68–88 (LLALVTWGGVAFLLWYGFGAL), 111–131 (IIATMLAVTWLNPHVYLDTFV), 147–167 (WFALGTVSASFLWFFGLALLA), and 186–206 (LVGLVMWFIAFQLAKEGIHHI).

Belongs to the LysE/ArgO transporter (TC 2.A.75) family.

The protein localises to the cell inner membrane. It carries out the reaction L-arginine(in) = L-arginine(out). Involved in the export of arginine. Important to control the intracellular level of arginine and the correct balance between arginine and lysine. The chain is Arginine exporter protein ArgO from Enterobacter sp. (strain 638).